We begin with the raw amino-acid sequence, 459 residues long: Probable D-serine dehydratase (459 aa).

Position 119 is an N6-(pyridoxal phosphate)lysine (Lys-119).

Belongs to the serine/threonine dehydratase family. DsdA subfamily. Requires pyridoxal 5'-phosphate as cofactor.

The enzyme catalyses D-serine = pyruvate + NH4(+). The polypeptide is Probable D-serine dehydratase (Geobacillus stearothermophilus (Bacillus stearothermophilus)).